Here is a 139-residue protein sequence, read N- to C-terminus: ATP synthase epsilon chain (139 aa).

This sequence belongs to the ATPase epsilon chain family. F-type ATPases have 2 components, CF(1) - the catalytic core - and CF(0) - the membrane proton channel. CF(1) has five subunits: alpha(3), beta(3), gamma(1), delta(1), epsilon(1). CF(0) has three main subunits: a, b and c.

The protein localises to the cell inner membrane. In terms of biological role, produces ATP from ADP in the presence of a proton gradient across the membrane. The chain is ATP synthase epsilon chain from Erwinia tasmaniensis (strain DSM 17950 / CFBP 7177 / CIP 109463 / NCPPB 4357 / Et1/99).